A 143-amino-acid polypeptide reads, in one-letter code: MNKTITPSLETIERNWFLVDAKDKTLGRLATEIATVLRGKNKPTFTPHLDTGDFVIVVNAEKIEVSGKKASQKLYRRHSGRPGGMKTEKFESLQERIPERIIEQAVKGMLPHNSLGRQQFKKLKVYKGADHPHAAQNPVLLNS.

It belongs to the universal ribosomal protein uL13 family. As to quaternary structure, part of the 50S ribosomal subunit.

This protein is one of the early assembly proteins of the 50S ribosomal subunit, although it is not seen to bind rRNA by itself. It is important during the early stages of 50S assembly. The sequence is that of Large ribosomal subunit protein uL13 from Prochlorococcus marinus (strain MIT 9312).